We begin with the raw amino-acid sequence, 159 residues long: Ribosomal RNA large subunit methyltransferase H (159 aa).

S-adenosyl-L-methionine is bound by residues Leu76, Gly108, and 127 to 132; that span reads FSKMTL.

The protein belongs to the RNA methyltransferase RlmH family. In terms of assembly, homodimer.

Its subcellular location is the cytoplasm. It carries out the reaction pseudouridine(1915) in 23S rRNA + S-adenosyl-L-methionine = N(3)-methylpseudouridine(1915) in 23S rRNA + S-adenosyl-L-homocysteine + H(+). Functionally, specifically methylates the pseudouridine at position 1915 (m3Psi1915) in 23S rRNA. This is Ribosomal RNA large subunit methyltransferase H from Bacillus cereus (strain ATCC 14579 / DSM 31 / CCUG 7414 / JCM 2152 / NBRC 15305 / NCIMB 9373 / NCTC 2599 / NRRL B-3711).